We begin with the raw amino-acid sequence, 123 residues long: Large ribosomal subunit protein bL12 (123 aa).

It belongs to the bacterial ribosomal protein bL12 family. As to quaternary structure, homodimer. Part of the ribosomal stalk of the 50S ribosomal subunit. Forms a multimeric L10(L12)X complex, where L10 forms an elongated spine to which 2 to 4 L12 dimers bind in a sequential fashion. Binds GTP-bound translation factors.

Forms part of the ribosomal stalk which helps the ribosome interact with GTP-bound translation factors. Is thus essential for accurate translation. This is Large ribosomal subunit protein bL12 from Haemophilus influenzae (strain 86-028NP).